We begin with the raw amino-acid sequence, 583 residues long: MLO-like protein 6 (583 aa).

At 1-15 (MADQVKEKTLEETST) the chain is on the extracellular side. A helical transmembrane segment spans residues 16 to 36 (WAVAVVCFVLLLISIVIEKLI). Topologically, residues 37 to 61 (HKIGSWFKKKNKKALYEALEKVKAE) are cytoplasmic. Residues 62–82 (LMLMGFISLLLTIGQGYISNI) form a helical membrane-spanning segment. Residues 83–161 (CIPKNIAASM…VSAYGMHQLH (79 aa)) lie on the Extracellular side of the membrane. The helical transmembrane segment at 162-182 (IFIFVLAVCHVIYCIVTYALG) threads the bilayer. Residues 183-284 (KTKMRRWKKW…KYIQRSLEED (102 aa)) are Cytoplasmic-facing. A helical membrane pass occupies residues 285 to 305 (FKTIVEINPVIWFIAVLFLLT). The Extracellular segment spans residues 306–314 (NTNGLNSYL). Residues 315–335 (WLPFIPFIVILIVGTKLQVII) form a helical membrane-spanning segment. At 336-368 (TKLGLRIQEKGDVVKGTPLVQPGDHFFWFGRPR) the chain is on the cytoplasmic side. The helical transmembrane segment at 369-389 (FILFLIHLVLFTNAFQLAFFV) threads the bilayer. At 390-411 (WSTYEFGLKNCFHESRVDVIIR) the chain is on the extracellular side. The chain crosses the membrane as a helical span at residues 412–432 (ISIGLLVQILCSYVTLPLYAL). The Cytoplasmic portion of the chain corresponds to 433 to 583 (VTQMGSKMKP…ISLRDFSFKR (151 aa)). The interval 447–468 (ERVATALKSWHHTAKKNIKHGR) is calmodulin-binding. The interval 461 to 583 (KKNIKHGRTS…ISLRDFSFKR (123 aa)) is disordered. Low complexity predominate over residues 470-484 (SESTTPFSSRPTTPT). Over residues 541–551 (RFGEEESEKKF) the composition is skewed to basic and acidic residues.

The protein belongs to the MLO family.

The protein localises to the membrane. Functionally, may be involved in modulation of pathogen defense and leaf cell death. Activity seems to be regulated by Ca(2+)-dependent calmodulin binding and seems not to require heterotrimeric G proteins. The sequence is that of MLO-like protein 6 (MLO6) from Arabidopsis thaliana (Mouse-ear cress).